The following is a 26-amino-acid chain: DEAD-box ATP-dependent RNA helicase 1 (26 aa).

The Q motif motif lies at 1 to 10 (RELLMGIFEK). 11–16 (NGTGKT) provides a ligand contact to ATP. One can recognise a Helicase ATP-binding domain in the interval 11-26 (NGTGKTAAFVIPLLQK).

It belongs to the DEAD box helicase family. DDX6/DHH1 subfamily.

It localises to the cytoplasm. The protein localises to the P-body. It catalyses the reaction ATP + H2O = ADP + phosphate + H(+). In terms of biological role, ATP-dependent RNA helicase involved in mRNA turnover, and more specifically in mRNA decapping. The chain is DEAD-box ATP-dependent RNA helicase 1 from Catharanthus roseus (Madagascar periwinkle).